The chain runs to 399 residues: Flavohemoprotein (399 aa).

One can recognise a Globin domain in the interval 1-138; it reads MLAEKTRSII…IADIFITVEK (138 aa). Position 22 is a phosphothreonine (Thr22). His85 contacts heme b. Active-site charge relay system residues include Tyr95 and Glu137. The tract at residues 146-399 is reductase; sequence WPGWKPFDIT…FGPKMSTVQV (254 aa). The FAD-binding FR-type domain occupies 147-264; it reads PGWKPFDITA…SAPAGDFAIN (118 aa). Residues Tyr189 and 207-210 contribute to the FAD site; that span reads RHYS. 281-286 contributes to the NADP(+) binding site; the sequence is GVGVTP. 389–392 contributes to the FAD binding site; it reads PFGP.

Belongs to the globin family. Two-domain flavohemoproteins subfamily. It in the C-terminal section; belongs to the flavoprotein pyridine nucleotide cytochrome reductase family. The cofactor is FAD. Heme b is required as a cofactor.

The protein resides in the cytoplasm. The catalysed reaction is 2 nitric oxide + NADPH + 2 O2 = 2 nitrate + NADP(+) + H(+). It carries out the reaction 2 nitric oxide + NADH + 2 O2 = 2 nitrate + NAD(+) + H(+). Its function is as follows. Is involved in NO detoxification in an aerobic process, termed nitric oxide dioxygenase (NOD) reaction that utilizes O(2) and NAD(P)H to convert NO to nitrate, which protects the fungus from various noxious nitrogen compounds. Therefore, plays a central role in the inducible response to nitrosative stress. Functionally, in the presence of oxygen and NADH, it has NADH oxidase activity, which leads to the generation of superoxide and H(2)O(2). Under anaerobic conditions, it also exhibits nitric oxide reductase and FAD reductase activities. However, all these reactions are much lower than NOD activity. In Saccharomyces cerevisiae (strain ATCC 204508 / S288c) (Baker's yeast), this protein is Flavohemoprotein (YHB1).